We begin with the raw amino-acid sequence, 201 residues long: FMN-dependent NADH:quinone oxidoreductase (201 aa).

Residues serine 10, 16–18 (SQS), 96–99 (MYNF), and 140–143 (SRGG) each bind FMN.

It belongs to the azoreductase type 1 family. Homodimer. Requires FMN as cofactor.

It carries out the reaction 2 a quinone + NADH + H(+) = 2 a 1,4-benzosemiquinone + NAD(+). The catalysed reaction is N,N-dimethyl-1,4-phenylenediamine + anthranilate + 2 NAD(+) = 2-(4-dimethylaminophenyl)diazenylbenzoate + 2 NADH + 2 H(+). Functionally, quinone reductase that provides resistance to thiol-specific stress caused by electrophilic quinones. Its function is as follows. Also exhibits azoreductase activity. Catalyzes the reductive cleavage of the azo bond in aromatic azo compounds to the corresponding amines. In Cronobacter sakazakii (strain ATCC BAA-894) (Enterobacter sakazakii), this protein is FMN-dependent NADH:quinone oxidoreductase.